The sequence spans 376 residues: Probable ureide permease A3 (376 aa).

Residues 1-9 are Extracellular-facing; the sequence is HLVESKGGA. A helical membrane pass occupies residues 10-30; the sequence is IACMFLALFFLGTWPALLTML. Residues 31–41 lie on the Cytoplasmic side of the membrane; sequence ERRGRLPQHTY. Residues 42 to 62 traverse the membrane as a helical segment; sequence LDYSITNFFAALLIAFTFGEI. Topologically, residues 63-80 are extracellular; it reads GKGKPDEPNFLAQLAQDN. A helical membrane pass occupies residues 81-101; that stretch reads WPSVLFAMGGGVVLSLGNLSS. Over 102-103 the chain is Cytoplasmic; it reads QY. Residues 104-124 form a helical membrane-spanning segment; sequence AFAFVGLSVTEVITASITVVI. At 125 to 137 the chain is on the extracellular side; sequence GTTLNYFLDDKIN. Residues 138 to 158 form a helical membrane-spanning segment; the sequence is KAEILFPGVGCFLIAVFLGFC. Residues 159–231 are Cytoplasmic-facing; that stretch reads RFNSSNASDN…RAIKVFGKST (73 aa). 223-230 lines the ATP pocket; it reads AIKVFGKS. A helical transmembrane segment spans residues 232–252; the sequence is LIGLALTFSAGLCFSMFSPAF. The Extracellular segment spans residues 253–274; it reads NLATNDQWHTLPNGIPHLTVYT. Residues 275–295 traverse the membrane as a helical segment; it reads AFFYFSISCFVIAIILNITFL. Residues 296–317 are Cytoplasmic-facing; the sequence is YHPVLNLPKSSLKAYLADSDGR. The helical transmembrane segment at 318-338 threads the bilayer; sequence IWALLAGLLCGFGNSLQFMGG. Residues 339 to 376 lie on the Extracellular side of the membrane; sequence QAAGYQQQSLCRHFLCKHFWGVLLFGEYRRSSRKTYIC.

The protein belongs to the plant ureide permease (TC 2.A.7.19) family.

The protein resides in the membrane. In terms of biological role, transports a wide spectrum of oxo derivatives of heterocyclic nitrogen compounds. The polypeptide is Probable ureide permease A3 (A3) (Vigna unguiculata (Cowpea)).